The primary structure comprises 479 residues: ESX-1 secretion system ATPase EccB1 (479 aa).

The Cytoplasmic segment spans residues 1-44 (MAGFRLTTKVQVSGWRFLLRRVEHAIVRRDTRMFDDPLQFYSRA). The chain crosses the membrane as a helical span at residues 45–65 (VFAGVVVSVLICLGAALMAYF). Topologically, residues 66 to 479 (KPLGKQGSDQ…NPRKVASGEG (414 aa)) are periplasmic. A disulfide bridge connects residues cysteine 152 and cysteine 347.

Belongs to the EccB family. As to quaternary structure, part of the ESX-1 / type VII secretion system (T7SS), which is composed of cytosolic and membrane components. The ESX-1 membrane complex is composed of EccB1, EccCa1, EccCb1, EccD1 and EccE1.

It localises to the cell inner membrane. Its function is as follows. An ATPase. Part of the ESX-1 / type VII specialized secretion system (T7SS), which exports several proteins including EsxA and EsxB. Plays a role in DNA conjugation, in both donor and recipient strains. In Mycolicibacterium smegmatis (strain MKD8) (Mycobacterium smegmatis), this protein is ESX-1 secretion system ATPase EccB1.